Reading from the N-terminus, the 43-residue chain is Potassium channel toxin gamma-KTx 4.5 (43 aa).

4 cysteine pairs are disulfide-bonded: cysteine 5/cysteine 23, cysteine 11/cysteine 34, cysteine 20/cysteine 39, and cysteine 24/cysteine 41.

This sequence belongs to the ergtoxin family. Gamma-KTx 4 subfamily. As to expression, expressed by the venom gland.

It is found in the secreted. Its function is as follows. Reversibly blocks Kv11/ERG potassium channels. The polypeptide is Potassium channel toxin gamma-KTx 4.5 (Centruroides exilicauda (Bark scorpion)).